The chain runs to 197 residues: dTTP/UTP pyrophosphatase (197 aa).

D70 serves as the catalytic Proton acceptor.

Belongs to the Maf family. YhdE subfamily. It depends on a divalent metal cation as a cofactor.

It is found in the cytoplasm. The enzyme catalyses dTTP + H2O = dTMP + diphosphate + H(+). It catalyses the reaction UTP + H2O = UMP + diphosphate + H(+). In terms of biological role, nucleoside triphosphate pyrophosphatase that hydrolyzes dTTP and UTP. May have a dual role in cell division arrest and in preventing the incorporation of modified nucleotides into cellular nucleic acids. The chain is dTTP/UTP pyrophosphatase from Yersinia pestis bv. Antiqua (strain Antiqua).